Here is a 128-residue protein sequence, read N- to C-terminus: Large ribosomal subunit protein bL20 (128 aa).

It belongs to the bacterial ribosomal protein bL20 family.

Binds directly to 23S ribosomal RNA and is necessary for the in vitro assembly process of the 50S ribosomal subunit. It is not involved in the protein synthesizing functions of that subunit. In Anaplasma phagocytophilum (strain HZ), this protein is Large ribosomal subunit protein bL20.